The primary structure comprises 860 residues: Pentatricopeptide repeat-containing protein At2g40720 (860 aa).

20 PPR repeats span residues 59–93 (SVFT…GWRY), 94–124 (DPFI…WSQS), 132–166 (DVTV…GVRP), 167–203 (DAFS…SLDT), 204–234 (DSFL…IEDK), 236–270 (NVVL…SVKL), 271–305 (VSTS…GLHN), 306–340 (DPYV…RLEI), 341–371 (WNAM…SVLP), 372–406 (DSFT…PIQS), 407–437 (TSTI…MEEK), 438–472 (DMVA…DDSL), 475–509 (DSDI…GLVL), 510–540 (NVFV…MSTE), 541–575 (NMVA…GIFP), 576–610 (DSVS…GIPS), 611–641 (DTHL…MQHK), 642–676 (SLIT…GESP), 677–707 (DDVT…MKQD), and 713–743 (NMEH…MPIE). Residues 748 to 823 (IWLCLLSASR…QPGCSWIEVS (76 aa)) form a type E motif region. A type E(+) motif region spans residues 824–854 (DRTNVFFSGGSSSPMKAEIFNVLNRLKSNMV).

It belongs to the PPR family. PCMP-E subfamily.

The polypeptide is Pentatricopeptide repeat-containing protein At2g40720 (PCMP-E26) (Arabidopsis thaliana (Mouse-ear cress)).